A 322-amino-acid chain; its full sequence is Beta-carotene 3-hydroxylase, chloroplastic (322 aa).

A chloroplast-targeting transit peptide spans 1–68 (TFHKPVSGAS…AQRCSLVRLR (68 aa)). Transmembrane regions (helical) follow at residues 118-138 (QAAA…ATYL) and 149-169 (AVPW…ALGM). The Fatty acid hydroxylase domain occupies 164–286 (GGALGMEMYA…AHQLHHSGKY (123 aa)). Positions 177 to 182 (HKAIWH) match the Histidine box-1 motif. The Histidine box-2 signature appears at 191 to 195 (HKSHH). 2 helical membrane-spanning segments follow: residues 207–227 (LFAI…FWLP) and 231–251 (GAAC…YMFV). The Histidine box-3 signature appears at 252–257 (HDGLVH). The short motif at 278 to 282 (HQLHH) is the Histidine box-4 element.

This sequence belongs to the sterol desaturase family.

Its subcellular location is the plastid. The protein resides in the chloroplast membrane. It catalyses the reaction all-trans-beta-carotene + 4 reduced [2Fe-2S]-[ferredoxin] + 2 O2 + 4 H(+) = all-trans-zeaxanthin + 4 oxidized [2Fe-2S]-[ferredoxin] + 2 H2O. Its function is as follows. Nonheme diiron monooxygenase involved in the biosynthesis of astaxanthin. Hydroxylates beta-ring of beta-carotene and catalyzes the conversion of canthaxanthin to astaxanthin. Uses ferredoxin as an electron donor. The chain is Beta-carotene 3-hydroxylase, chloroplastic (CRTZ) from Haematococcus lacustris (Green alga).